The following is a 318-amino-acid chain: Cytochrome c biogenesis protein CcsA (318 aa).

8 consecutive transmembrane segments (helical) span residues 17–37 (VLAL…ISFW), 45–65 (SAVV…QLVL), 75–95 (ISNL…AQLL), 104–124 (IVSA…SFAL), 149–169 (VIMC…AVLF), 224–244 (TITV…VWAN), 258–275 (TWAL…HTRF), and 287–307 (VAVA…LLGI).

Belongs to the CcmF/CycK/Ccl1/NrfE/CcsA family. May interact with ccs1.

It localises to the cellular thylakoid membrane. Its function is as follows. Required during biogenesis of c-type cytochromes (cytochrome c6 and cytochrome f) at the step of heme attachment. In Prochlorococcus marinus (strain MIT 9313), this protein is Cytochrome c biogenesis protein CcsA.